We begin with the raw amino-acid sequence, 1547 residues long: ABC multidrug transporter atrF (1547 aa).

Disordered regions lie at residues 1–66 (MADG…RRGA) and 85–123 (TRSV…IDGD). The span at 10 to 19 (SATSTTMETN) shows a compositional bias: polar residues. The span at 36–47 (SSSMTATSSELS) shows a compositional bias: low complexity. Positions 51–66 (RWGERDQGEPVSRRGA) are enriched in basic and acidic residues. A compositionally biased stretch (acidic residues) spans 111–123 (KAIDEEDSTIDGD). One can recognise an ABC transporter 1 domain in the interval 197 to 439 (IPQLRFGKQP…FVNLGFHCPE (243 aa)). Asparagine 299 and asparagine 363 each carry an N-linked (GlcNAc...) asparagine glycan. A run of 7 helical transmembrane segments spans residues 552-572 (LYTK…LFYG), 586-606 (ALFF…MPAV), 635-655 (FPAI…MTGL), 657-677 (VTAS…FSIT), 698-718 (GIAL…QGLI), 722-742 (IWFG…AVLT), and 804-824 (FGVV…AAEF). Positions 892-1130 (FTWSNVEYTV…DVIKYFADRG (239 aa)) constitute an ABC transporter 2 domain. Asparagine 905 carries N-linked (GlcNAc...) asparagine glycosylation. Residue 928-935 (GASGAGKT) participates in ATP binding. N-linked (GlcNAc...) asparagine glycans are attached at residues asparagine 980 and asparagine 999. 8 consecutive transmembrane segments (helical) span residues 1230-1250 (FVSV…GNSI), 1260-1280 (IFLI…KFYI), 1309-1329 (IPMA…PVGF), 1334-1354 (STAG…SSWG), 1356-1376 (WICA…FFFV), 1397-1417 (YWMY…SSIF), 1491-1511 (CFGI…FFIY), and 1520-1540 (FGMG…KGVF).

It belongs to the ABC transporter superfamily. ABCG family. PDR (TC 3.A.1.205) subfamily.

The protein resides in the cell membrane. It catalyses the reaction voriconazole(in) + ATP + H2O = voriconazole(out) + ADP + phosphate + H(+). The catalysed reaction is fluconazole(in) + ATP + H2O = fluconazole(out) + ADP + phosphate + H(+). Pleiotropic ABC efflux transporter involved in the basal level of azole susceptibility. Confers resistance to fluconazole and voriconazole. The protein is ABC multidrug transporter atrF of Aspergillus fumigatus (strain ATCC MYA-4609 / CBS 101355 / FGSC A1100 / Af293) (Neosartorya fumigata).